The primary structure comprises 398 residues: tRNA (guanine-N(7)-)-methyltransferase (398 aa).

S-adenosyl-L-methionine-binding residues include Glu-124, Glu-149, and Asp-176. Asp-232 is a substrate binding site.

The protein belongs to the class I-like SAM-binding methyltransferase superfamily. TrmB family.

It catalyses the reaction guanosine(46) in tRNA + S-adenosyl-L-methionine = N(7)-methylguanosine(46) in tRNA + S-adenosyl-L-homocysteine. It functions in the pathway tRNA modification; N(7)-methylguanine-tRNA biosynthesis. In terms of biological role, catalyzes the formation of N(7)-methylguanine at position 46 (m7G46) in tRNA. This chain is tRNA (guanine-N(7)-)-methyltransferase, found in Helicobacter acinonychis (strain Sheeba).